We begin with the raw amino-acid sequence, 651 residues long: Ion-translocating oxidoreductase complex subunit C (651 aa).

4Fe-4S ferredoxin-type domains follow at residues 368 to 398 (EYAE…QQLY) and 408 to 437 (KSEE…IQYF). Residues cysteine 378, cysteine 381, cysteine 384, cysteine 388, cysteine 417, cysteine 420, cysteine 423, and cysteine 427 each coordinate [4Fe-4S] cluster. Basic and acidic residues-rich tracts occupy residues 465 to 477 (QARM…ERKA) and 485 to 513 (ARRE…KANE). 2 disordered regions span residues 465 to 565 (QARM…QPTD) and 583 to 624 (LAQA…DPKK). Composition is skewed to polar residues over residues 554-564 (VENQEQQTQPT) and 587-600 (NSTS…QTAE). Over residues 602–614 (EVEKTKSAVEKTQ) the composition is skewed to basic and acidic residues.

Belongs to the 4Fe4S bacterial-type ferredoxin family. RnfC subfamily. The complex is composed of six subunits: RnfA, RnfB, RnfC, RnfD, RnfE and RnfG. Requires [4Fe-4S] cluster as cofactor.

Its subcellular location is the cell inner membrane. Its function is as follows. Part of a membrane-bound complex that couples electron transfer with translocation of ions across the membrane. The chain is Ion-translocating oxidoreductase complex subunit C from Haemophilus influenzae (strain PittEE).